The primary structure comprises 82 residues: Small ribosomal subunit protein bS16 (82 aa).

This sequence belongs to the bacterial ribosomal protein bS16 family.

This is Small ribosomal subunit protein bS16 from Pectobacterium atrosepticum (strain SCRI 1043 / ATCC BAA-672) (Erwinia carotovora subsp. atroseptica).